We begin with the raw amino-acid sequence, 423 residues long: Glycine amidinotransferase, mitochondrial (423 aa).

The transit peptide at 1–48 directs the protein to the mitochondrion; that stretch reads MLRVRCLRGGSRGAEAVHYIGSRLGRTLTGWVQRTFQSTQAATASSRN. The segment covering 39–51 has biased composition (low complexity); that stretch reads TQAATASSRNSSA. Positions 39–65 are disordered; sequence TQAATASSRNSSAADDKATEPLPKDCP. Phosphoserine is present on residues serine 46 and serine 49. Residues 52–61 show a composition bias toward basic and acidic residues; the sequence is ADDKATEPLP. Aspartate 170 is an arginine binding site. Catalysis depends on residues aspartate 254 and histidine 303. The arginine site is built by aspartate 305, arginine 322, serine 354, and serine 355. Lysine 385 is subject to N6-acetyllysine. The active-site Amidino-cysteine intermediate is the cysteine 407.

This sequence belongs to the amidinotransferase family. Homodimer.

The protein localises to the mitochondrion inner membrane. The catalysed reaction is L-arginine + glycine = guanidinoacetate + L-ornithine. The enzyme catalyses 4-aminobutanoate + L-arginine = 4-guanidinobutanoate + L-ornithine. It carries out the reaction beta-alanine + L-arginine = 3-guanidinopropanoate + L-ornithine. It catalyses the reaction taurine + L-arginine = taurocyamine + L-ornithine. The protein operates within amine and polyamine biosynthesis; creatine biosynthesis; creatine from L-arginine and glycine: step 1/2. Functionally, transamidinase that catalyzes the transfer of the amidino group of L-arginine onto the amino moiety of acceptor metabolites such as glycine, beta-alanine, gamma-aminobutyric acid (GABA) and taurine yielding the corresponding guanidine derivatives. Catalyzes the rate-limiting step of creatine biosynthesis, namely the transfer of the amidino group from L-arginine to glycine to generate guanidinoacetate, which is then methylated by GAMT to form creatine. Provides creatine as a source for ATP generation in tissues with high energy demands, in particular skeletal muscle, heart and brain. This chain is Glycine amidinotransferase, mitochondrial (GATM), found in Pongo abelii (Sumatran orangutan).